The following is a 502-amino-acid chain: Tubulin gamma chain (502 aa).

Positions 51–68 (ELNNSGSSPQSYPQQTKP) are enriched in polar residues. The tract at residues 51 to 73 (ELNNSGSSPQSYPQQTKPNGKYR) is disordered. Position 169-175 (169-175 (AGGTGSG)) interacts with GTP. The segment covering 473 to 482 (DDEDDLEDGD) has biased composition (acidic residues). The interval 473-502 (DDEDDLEDGDGGGGGNGNGYNNIDDADMGI) is disordered.

It belongs to the tubulin family.

Its subcellular location is the cytoplasm. The protein localises to the cytoskeleton. The protein resides in the microtubule organizing center. It is found in the spindle pole body. Its function is as follows. Tubulin is the major constituent of microtubules. The gamma chain is found at microtubule organizing centers (MTOC) such as the spindle poles or the centrosome, suggesting that it is involved in the minus-end nucleation of microtubule assembly. The protein is Tubulin gamma chain (TUB4) of Candida albicans (Yeast).